The primary structure comprises 360 residues: MDKFFDKLQAVADRYEELGELLSDPEVISDSQRFMKLSKEMGNIRETVEKYNHYKEVTSQIEENDELLHEKLDDEMNAMVKDDLKNLNAEKDQLEHEITLLMLPKDPNDDKNIIMEIHGAAGGDEASLFAADLFNMYSKYAERQGWQVEVADRNETEVGGFKEIVLIISGDKVYSKLKYESGAHRVQRVPVTESAGRVHTSTATVGVMPEAQDVDIDIDQKDIRTDVFRSSGAGGQHINKTSSAVRMTHLPTGIVVSMQDQRSQQQNRAKAMEILRARVYDYYQSREQNEYDAERKSAVGTGDRSERIRTYNFPQNRVTDHRIGLTLNKLDRVMNGELDEVIDALVLADQAEKMERLTNE.

Q236 carries the post-translational modification N5-methylglutamine.

It belongs to the prokaryotic/mitochondrial release factor family. In terms of processing, methylated by PrmC. Methylation increases the termination efficiency of RF1.

It localises to the cytoplasm. Peptide chain release factor 1 directs the termination of translation in response to the peptide chain termination codons UAG and UAA. This is Peptide chain release factor 1 from Lactiplantibacillus plantarum (strain ATCC BAA-793 / NCIMB 8826 / WCFS1) (Lactobacillus plantarum).